A 177-amino-acid chain; its full sequence is MMNSCTPNKKSSYSYEDLLASGRGELFGEDGPQLPAPTMLMMDRIVEMNETGGQFNKGYIEAELDIKPDLPFFGCHFIGDPVMPGCLGLDAMWQLVGFYLGWIGGKGKGRALGVGEVKFTGQILPSAKKVVYRIHMKRVINRKLVMGMADGEVEVDGRVIYTATDLKVGLFQDTSAF.

The active site involves His-76.

It belongs to the thioester dehydratase family. FabA subfamily. As to quaternary structure, homodimer.

It localises to the cytoplasm. The catalysed reaction is a (3R)-hydroxyacyl-[ACP] = a (2E)-enoyl-[ACP] + H2O. It carries out the reaction (3R)-hydroxydecanoyl-[ACP] = (2E)-decenoyl-[ACP] + H2O. It catalyses the reaction (2E)-decenoyl-[ACP] = (3Z)-decenoyl-[ACP]. It functions in the pathway lipid metabolism; fatty acid biosynthesis. Necessary for the introduction of cis unsaturation into fatty acids. Catalyzes the dehydration of (3R)-3-hydroxydecanoyl-ACP to E-(2)-decenoyl-ACP and then its isomerization to Z-(3)-decenoyl-ACP. Can catalyze the dehydratase reaction for beta-hydroxyacyl-ACPs with saturated chain lengths up to 16:0, being most active on intermediate chain length. The chain is 3-hydroxydecanoyl-[acyl-carrier-protein] dehydratase (fabA) from Pasteurella multocida (strain Pm70).